A 563-amino-acid chain; its full sequence is uncharacterized protein (563 aa).

This sequence belongs to the HyuB family.

This is an uncharacterized protein from Methanocaldococcus jannaschii (strain ATCC 43067 / DSM 2661 / JAL-1 / JCM 10045 / NBRC 100440) (Methanococcus jannaschii).